A 266-amino-acid polypeptide reads, in one-letter code: Methylsterol monooxygenase 2-2 (266 aa).

The next 3 helical transmembrane spans lie at 24-44 (IGSFLLHESVFFLSGLPFIFL), 71-91 (RLLLYHFSVNLPLMLASYPVF), and 107-127 (EVSAQILFYFIIEDFVFYWGH). Positions 113 to 247 (LFYFIIEDFV…FVYMDWIFGT (135 aa)) constitute a Fatty acid hydroxylase domain. Residues 127-131 (HRILH) carry the Histidine box-1 motif. A Histidine box-2 motif is present at residues 140–144 (HSVHH). A helical membrane pass occupies residues 162–182 (ILFLGFATIVGPALTGPHLIT). The Histidine box-3 signature appears at 219–225 (FHDYHHR).

This sequence belongs to the sterol desaturase family. Fe cation serves as cofactor. As to expression, expressed in shoots, roots, siliques and flowers, and, slightly, in developing seeds.

The protein resides in the endoplasmic reticulum membrane. It carries out the reaction 4,4-dimethyl-5alpha-cholest-7-en-3beta-ol + 6 Fe(II)-[cytochrome b5] + 3 O2 + 5 H(+) = 4alpha-carboxy-4beta-methyl-5alpha-cholest-7-ene-3beta-ol + 6 Fe(III)-[cytochrome b5] + 4 H2O. It catalyses the reaction 24-methylidenelophenol + 6 Fe(II)-[cytochrome b5] + 3 O2 + 5 H(+) = 4alpha-carboxy-ergosta-7,24(24(1))-dien-3beta-ol + 6 Fe(III)-[cytochrome b5] + 4 H2O. In terms of biological role, non-heme iron oxygenase involved in sterols biosynthesis by catalyzing the removal of the second methyl group at the C-4 position. 24-ethylidenelophenol and 24-ethyllophenol are the preferred substrates. Together with SMO2-1, required during embryogenesis, probably by maintaining sterols and auxin homeostasis. This chain is Methylsterol monooxygenase 2-2, found in Arabidopsis thaliana (Mouse-ear cress).